Here is a 479-residue protein sequence, read N- to C-terminus: Ribosomal RNA small subunit methyltransferase F (479 aa).

S-adenosyl-L-methionine contacts are provided by residues 125-131 (AAAPGSK), glutamate 149, aspartate 176, and aspartate 194. The active-site Nucleophile is the cysteine 247.

It belongs to the class I-like SAM-binding methyltransferase superfamily. RsmB/NOP family.

Its subcellular location is the cytoplasm. The enzyme catalyses cytidine(1407) in 16S rRNA + S-adenosyl-L-methionine = 5-methylcytidine(1407) in 16S rRNA + S-adenosyl-L-homocysteine + H(+). In terms of biological role, specifically methylates the cytosine at position 1407 (m5C1407) of 16S rRNA. The chain is Ribosomal RNA small subunit methyltransferase F from Shigella dysenteriae serotype 1 (strain Sd197).